A 905-amino-acid polypeptide reads, in one-letter code: Protein translocase subunit SecA (905 aa).

ATP contacts are provided by residues glutamine 87, 105–109 (GEGKT), and aspartate 512. The tract at residues 565–584 (RRIDNQLRGRSGRQGDPGSS) is disordered. Residues cysteine 886, cysteine 888, cysteine 897, and histidine 898 each coordinate Zn(2+).

Belongs to the SecA family. Monomer and homodimer. Part of the essential Sec protein translocation apparatus which comprises SecA, SecYEG and auxiliary proteins SecDF-YajC and YidC. Zn(2+) serves as cofactor.

The protein localises to the cell inner membrane. It localises to the cytoplasm. It catalyses the reaction ATP + H2O + cellular proteinSide 1 = ADP + phosphate + cellular proteinSide 2.. Its function is as follows. Part of the Sec protein translocase complex. Interacts with the SecYEG preprotein conducting channel. Has a central role in coupling the hydrolysis of ATP to the transfer of proteins into and across the cell membrane, serving both as a receptor for the preprotein-SecB complex and as an ATP-driven molecular motor driving the stepwise translocation of polypeptide chains across the membrane. The protein is Protein translocase subunit SecA of Haemophilus ducreyi (strain 35000HP / ATCC 700724).